The chain runs to 469 residues: C4b-binding protein (469 aa).

A signal peptide spans 1–56 (MCAKQQQTLLPTRAAHGRLHRNRDAVAWPFSTLCRVSGPTLFQMTFTAALWVAVFG). Sushi domains follow at residues 57–117 (KCGP…SCAK), 118–178 (KHCR…ECVI), 179–242 (VKCG…TCEK), 243–301 (IICS…TCEF), 302–357 (DCDL…QCKA), and 358–415 (LCQK…RCEQ). 12 disulfides stabilise this stretch: Cys-58–Cys-103, Cys-88–Cys-115, Cys-120–Cys-160, Cys-146–Cys-176, Cys-181–Cys-223, Cys-209–Cys-240, Cys-245–Cys-287, Cys-273–Cys-299, Cys-303–Cys-343, Cys-329–Cys-355, Cys-359–Cys-400, and Cys-386–Cys-413. Asn-74 carries N-linked (GlcNAc...) asparagine glycosylation. Residues Asn-227, Asn-275, and Asn-292 are each glycosylated (N-linked (GlcNAc...) asparagine). 2 N-linked (GlcNAc...) asparagine glycosylation sites follow: Asn-366 and Asn-381. An N-linked (GlcNAc...) asparagine glycan is attached at Asn-428.

As to quaternary structure, homoheptamer; not covalently linked. Mouse lacks the beta chain of C4BP.

The protein localises to the secreted. Functionally, controls the classical pathway of complement activation. It binds as a cofactor to C3b/C4b inactivator (C3bINA), which then hydrolyzes the complement fragment C4b. It also accelerates the degradation of the C4bC2a complex (C3 convertase) by dissociating the complement fragment C2a. Alpha chain binds C4b. It also interacts with serum amyloid P component. In Mus musculus (Mouse), this protein is C4b-binding protein (C4bpa).